Consider the following 173-residue polypeptide: Large ribosomal subunit protein bL9 (173 aa).

This sequence belongs to the bacterial ribosomal protein bL9 family.

In terms of biological role, binds to the 23S rRNA. The chain is Large ribosomal subunit protein bL9 from Rickettsia bellii (strain RML369-C).